Consider the following 74-residue polypeptide: U6-agatoxin-Ao1a (74 aa).

An N-terminal signal peptide occupies residues 1 to 19 (MRFYIAFFFLLLAADMALS). Residues 20–30 (FEIGNSEELER) constitute a propeptide that is removed on maturation. 3 disulfide bridges follow: C44–C56, C49–C61, and C55–C72.

In terms of tissue distribution, expressed by the venom gland.

The protein localises to the secreted. This chain is U6-agatoxin-Ao1a, found in Agelena orientalis (Funnel-web spider).